Reading from the N-terminus, the 686-residue chain is X-linked interleukin-1 receptor accessory protein-like 2 (686 aa).

Positions 1–16 (MKPPFLLALVVCSVVS) are cleaved as a signal peptide. Residues 17–354 (TNLKMVSKRN…LLRKKDLIYK (338 aa)) lie on the Extracellular side of the membrane. The region spanning 18 to 132 (NLKMVSKRNS…YCMKVSMSLT (115 aa)) is the Ig-like C2-type 1 domain. Cys-53 and Cys-116 are oxidised to a cystine. 5 N-linked (GlcNAc...) asparagine glycosylation sites follow: Asn-63, Asn-120, Asn-136, Asn-211, and Asn-328. Ig-like C2-type domains lie at 141-232 (CYNS…LKVT) and 239-347 (PPKP…VLLR). Cystine bridges form between Cys-162–Cys-214 and Cys-265–Cys-331. The helical transmembrane segment at 355-375 (IELAGGLGAIFLLLVLLVVIY) threads the bilayer. At 376–686 (KCYNIELMLF…KELSFTSDIW (311 aa)) the chain is on the cytoplasmic side. The TIR domain occupies 400–556 (KEYDAYLSYT…KFWKHLVYEM (157 aa)). Glu-488 is an active-site residue.

It belongs to the interleukin-1 receptor family. As to expression, detected at low levels in fetal and adult brain, in particular in the frontal lobe, temporal lobe and cerebellum. Detected at very low levels in skin, liver, fetal ovary and in placenta.

It localises to the membrane. The catalysed reaction is NAD(+) + H2O = ADP-D-ribose + nicotinamide + H(+). The chain is X-linked interleukin-1 receptor accessory protein-like 2 (IL1RAPL2) from Homo sapiens (Human).